The sequence spans 314 residues: Porphobilinogen deaminase (314 aa).

At cysteine 249 the chain carries S-(dipyrrolylmethanemethyl)cysteine.

This sequence belongs to the HMBS family. Monomer. The cofactor is dipyrromethane.

The catalysed reaction is 4 porphobilinogen + H2O = hydroxymethylbilane + 4 NH4(+). It participates in porphyrin-containing compound metabolism; protoporphyrin-IX biosynthesis; coproporphyrinogen-III from 5-aminolevulinate: step 2/4. Its function is as follows. Tetrapolymerization of the monopyrrole PBG into the hydroxymethylbilane pre-uroporphyrinogen in several discrete steps. This chain is Porphobilinogen deaminase, found in Brucella anthropi (strain ATCC 49188 / DSM 6882 / CCUG 24695 / JCM 21032 / LMG 3331 / NBRC 15819 / NCTC 12168 / Alc 37) (Ochrobactrum anthropi).